The chain runs to 352 residues: Chalcone synthase C (352 aa).

Cys-170 is an active-site residue.

Belongs to the thiolase-like superfamily. Chalcone/stilbene synthases family.

It catalyses the reaction (E)-4-coumaroyl-CoA + 3 malonyl-CoA + 3 H(+) = 2',4,4',6'-tetrahydroxychalcone + 3 CO2 + 4 CoA. It participates in secondary metabolite biosynthesis; flavonoid biosynthesis. Functionally, the primary product of this enzyme is 4,2',4',6'-tetrahydroxychalcone (also termed naringenin-chalcone or chalcone) which can under specific conditions spontaneously isomerize into naringenin. This chain is Chalcone synthase C (CHSC), found in Ipomoea purpurea (Common morning glory).